We begin with the raw amino-acid sequence, 260 residues long: Ribosomal RNA small subunit methyltransferase J (260 aa).

S-adenosyl-L-methionine is bound by residues 125 to 126 (ER) and D179.

Belongs to the methyltransferase superfamily. RsmJ family.

The protein resides in the cytoplasm. It carries out the reaction guanosine(1516) in 16S rRNA + S-adenosyl-L-methionine = N(2)-methylguanosine(1516) in 16S rRNA + S-adenosyl-L-homocysteine + H(+). In terms of biological role, specifically methylates the guanosine in position 1516 of 16S rRNA. The sequence is that of Ribosomal RNA small subunit methyltransferase J from Pseudomonas fluorescens (strain Pf0-1).